The following is a 437-amino-acid chain: Vacuolar cation/proton exchanger 2 (437 aa).

The disordered stretch occupies residues 1-29 (MMGAEKAEGMEELELEEGGGSPSPSPMTA). Residues 1–65 (MMGAEKAEGM…KWRRALTSVR (65 aa)) lie on the Cytoplasmic side of the membrane. A helical transmembrane segment spans residues 66–86 (VVILQAKINVLLPFGPLAVML). Topologically, residues 87–88 (HY) are extracellular. Residues 89–109 (LSANHQGWVFLFSLIGITPLA) traverse the membrane as a helical segment. At 110 to 126 (ERLGYATEQLALYTGPT) the chain is on the cytoplasmic side. Residues 127-147 (IGGLLNATFGNATEMIISLYA) form a helical membrane-spanning segment. The interval 136 to 171 (GNATEMIISLYALKNGMIRVVQQSLLGSILSNMLLV) is cation selection. Topologically, residues 148–161 (LKNGMIRVVQQSLL) are extracellular. Residues 162-182 (GSILSNMLLVLGCAFFAGGLV) traverse the membrane as a helical segment. At 183-194 (HPSRDQVFNKAS) the chain is on the cytoplasmic side. The chain crosses the membrane as a helical span at residues 195–215 (AVVNSGLLLMAVLGLMFPAVL). The Extracellular portion of the chain corresponds to 216–228 (HFTHSEVQYGKSE). A helical transmembrane segment spans residues 229–249 (VSLSRFSSCIMLVAYASYLFF). At 250-281 (QLKSQRSLYSPIGEQEEEVTEDEEEEKEITQG) the chain is on the cytoplasmic side. The helical transmembrane segment at 282 to 302 (EAICWLFVLTIWISILSGYLV) threads the bilayer. The Extracellular segment spans residues 303 to 310 (DAIQGASE). A helical membrane pass occupies residues 311-331 (SLNMPVAFISVILLPIVGNAA). Residues 328–363 (GNAAEHASAIMFAMKDKLDITLGVAIGSSTQISMFV) are cation selection. The Cytoplasmic portion of the chain corresponds to 332-352 (EHASAIMFAMKDKLDITLGVA). Residues 353–373 (IGSSTQISMFVIPFCVVIGWI) traverse the membrane as a helical segment. Over 374–379 (MGQQMD) the chain is Extracellular. Residues 380–400 (LNFQLFETATLFITVLVVAFM) traverse the membrane as a helical segment. Residues 401 to 408 (LQEGTSNY) lie on the Cytoplasmic side of the membrane. The chain crosses the membrane as a helical span at residues 409 to 429 (FKGLMLILCYLIVAASFFVHV). The Extracellular portion of the chain corresponds to 430–437 (DPDSSNNK).

It belongs to the Ca(2+):cation antiporter (CaCA) (TC 2.A.19) family. Cation/proton exchanger (CAX) subfamily. As to expression, expressed in roots and shoots.

The protein resides in the vacuole membrane. Functionally, vacuolar cation/proton exchanger (CAX). Translocates Ca(2+) and other metal ions into vacuoles using the proton gradient formed by H(+)-ATPase and H(+)-pyrophosphatase. The chain is Vacuolar cation/proton exchanger 2 (CAX2) from Oryza sativa subsp. japonica (Rice).